The primary structure comprises 313 residues: Porphobilinogen deaminase (313 aa).

C242 is modified (S-(dipyrrolylmethanemethyl)cysteine).

It belongs to the HMBS family. In terms of assembly, monomer. Requires dipyrromethane as cofactor.

The catalysed reaction is 4 porphobilinogen + H2O = hydroxymethylbilane + 4 NH4(+). The protein operates within porphyrin-containing compound metabolism; protoporphyrin-IX biosynthesis; coproporphyrinogen-III from 5-aminolevulinate: step 2/4. In terms of biological role, tetrapolymerization of the monopyrrole PBG into the hydroxymethylbilane pre-uroporphyrinogen in several discrete steps. In Marinobacter nauticus (strain ATCC 700491 / DSM 11845 / VT8) (Marinobacter aquaeolei), this protein is Porphobilinogen deaminase.